Here is a 138-residue protein sequence, read N- to C-terminus: NADH-quinone oxidoreductase subunit A 1 (138 aa).

The next 3 helical transmembrane spans lie at 19–39, 74–94, and 103–123; these read FLPL…LLLA, FYLI…IFAW, and LAGL…LVWL.

The protein belongs to the complex I subunit 3 family. NDH-1 is composed of 14 different subunits. Subunits NuoA, H, J, K, L, M, N constitute the membrane sector of the complex.

It is found in the cell inner membrane. It catalyses the reaction a quinone + NADH + 5 H(+)(in) = a quinol + NAD(+) + 4 H(+)(out). In terms of biological role, NDH-1 shuttles electrons from NADH, via FMN and iron-sulfur (Fe-S) centers, to quinones in the respiratory chain. The immediate electron acceptor for the enzyme in this species is believed to be ubiquinone. Couples the redox reaction to proton translocation (for every two electrons transferred, four hydrogen ions are translocated across the cytoplasmic membrane), and thus conserves the redox energy in a proton gradient. The protein is NADH-quinone oxidoreductase subunit A 1 of Geobacter metallireducens (strain ATCC 53774 / DSM 7210 / GS-15).